We begin with the raw amino-acid sequence, 520 residues long: MEELQGYLEKDRSRQQHFLYPLLFQEYIYALAHDYGLNGSIFYESAEVFGYDNKSSLALVKRLITRIYQQKSLIYLVNDSKQNRFVGHTHNNFFYSRFYSQMISESFSIIVEIPFSLRLVSYLKEKEIPKYHNLRSIHSIFPFLEDKLSHLNYVSAILIPHPIHMEILVQILQCWIQDVPFLHLLRFFLHEYHNWNSFLITQKKSIFVFSKEKKRLFRFIYNFYVFECEFLFVFIRKQSSYLRLTFFGTFFERTHFYGKIEHLQIEKLIVICRNDFHRTFWFFKDPFMHYVRYQGKAILASKGTHLLMTKWKYHFVNFWQYYFNFWSQPYRIQINQLSNYSFYFLGYLSSLLINSSAVRNQMLENSFIIDTLTKKFDTIVPVILLIGSLSKAKFCTISGHPISKPIWANLSDSDILDRFGRICRNLFHYHSGSSKKQGLYRIKYILRLSCARTLARKHKSTVRTFLRRLGSGLLEEFFTEEEEVLSLMFPKTTSFTLHGSHRERIWFLDIIRINELVNRS.

This sequence belongs to the intron maturase 2 family. MatK subfamily.

The protein localises to the plastid. It is found in the chloroplast. Its function is as follows. Usually encoded in the trnK tRNA gene intron. Probably assists in splicing its own and other chloroplast group II introns. The polypeptide is Maturase K (Galanthus elwesii (Giant snowdrop)).